A 405-amino-acid chain; its full sequence is 3-isopropylmalate dehydrogenase 2, chloroplastic (405 aa).

The N-terminal 33 residues, 1–33 (MAAALQTNIRTVKVPATFRAVSKQSLAPFRVRC), are a transit peptide targeting the chloroplast. Ser-70 is modified (phosphoserine). An NAD(+)-binding site is contributed by 114–129 (IGGYKWDNNEKHLRPE). Substrate-binding residues include Arg-136, Arg-146, and Arg-174. Asn-234 is a binding site for NAD(+). Asp-264 provides a ligand contact to substrate. Asp-264 lines the Mg(2+) pocket. Asn-265 is an NAD(+) binding site. Asp-288 and Asp-292 together coordinate Mg(2+). 318 to 334 (EPIHGSAPDIAGQDKAN) contacts NAD(+).

The protein belongs to the isocitrate and isopropylmalate dehydrogenases family. Homodimer. It depends on Mg(2+) as a cofactor. Mn(2+) is required as a cofactor. As to expression, expressed at low levels in seedlings, cotyledons, hypocotyls, flowers, roots, pollen, leaves and stems.

It localises to the plastid. The protein localises to the chloroplast stroma. The enzyme catalyses (2R,3S)-3-isopropylmalate + NAD(+) = 4-methyl-2-oxopentanoate + CO2 + NADH. Its pathway is amino-acid biosynthesis; L-leucine biosynthesis; L-leucine from 3-methyl-2-oxobutanoate: step 3/4. With respect to regulation, regulated by a thiol-based redox modification. Involved in leucine biosynthesis; catalyzes the oxidative decarboxylation step in leucine biosynthesis (primary metabolism). Catalyzes the oxidation of 3-carboxy-2-hydroxy-4-methylpentanoate (3-isopropylmalate, 3-IPM) to 3-carboxy-4-methyl-2-oxopentanoate. The product decarboxylates to 4-methyl-2 oxopentanoate. Required during pollen development and involved in embryo sac development. The protein is 3-isopropylmalate dehydrogenase 2, chloroplastic of Arabidopsis thaliana (Mouse-ear cress).